Consider the following 165-residue polypeptide: Nucleotide-binding protein P9515_05441 (165 aa).

This sequence belongs to the YajQ family.

In terms of biological role, nucleotide-binding protein. The polypeptide is Nucleotide-binding protein P9515_05441 (Prochlorococcus marinus (strain MIT 9515)).